Here is an 893-residue protein sequence, read N- to C-terminus: POU domain protein 2, isoform B (893 aa).

The segment at 586-668 (QMKQQQREDP…STPKPTSGLT (83 aa)) is disordered. Residues 602–617 (PLAKSPLRSPSLSPVP) show a composition bias toward low complexity. Residues 623 to 646 (QQRTPPNSMTANSLGMSSAVMTPN) show a composition bias toward polar residues. Over residues 647–665 (TPSMQQQPQLQQSTPKPTS) the composition is skewed to low complexity. Positions 681-755 (EETTDLEELE…LLQKWLEDAD (75 aa)) constitute a POU-specific domain. Residues 786–845 (RRKKRTSIETTVRTTLEKAFLMNCKPTSEEISQLSERLNMDKEVIRVWFCNRRQKEKRIN) constitute a DNA-binding region (homeobox).

It belongs to the POU transcription factor family. Class-2 subfamily. Initial expression in cellular blastoderm stage, then in ectodermal stripes during germband extension. Broad expression in the neuroectoderm followed by limitation to discrete subsets of CNS cells, and expression in specific PNS neurons and support cells.

The protein resides in the nucleus. In terms of biological role, DNA-binding regulatory protein implicated in early development. Involved in neuronal cell fate decision. May act as an octamer-dependent activator of transcription. Could also play an early role in specific ectodermal cells, and a subsequent role in the embryonic nervous system. This is POU domain protein 2, isoform B from Drosophila melanogaster (Fruit fly).